The following is a 743-amino-acid chain: Phosphoribosylformylglycinamidine synthase subunit PurL (743 aa).

Histidine 50 is an active-site residue. ATP contacts are provided by tyrosine 53 and lysine 92. Glutamate 94 is a Mg(2+) binding site. Substrate-binding positions include 95–98 (SHNH) and arginine 117. Residue histidine 96 is the Proton acceptor of the active site. Mg(2+) is bound at residue aspartate 118. Substrate is bound at residue glutamine 241. Position 269 (aspartate 269) interacts with Mg(2+). 313–315 (ESQ) provides a ligand contact to substrate. 2 residues coordinate ATP: aspartate 495 and glycine 532. Asparagine 533 lines the Mg(2+) pocket. Serine 535 provides a ligand contact to substrate.

Belongs to the FGAMS family. As to quaternary structure, monomer. Part of the FGAM synthase complex composed of 1 PurL, 1 PurQ and 2 PurS subunits.

It localises to the cytoplasm. It catalyses the reaction N(2)-formyl-N(1)-(5-phospho-beta-D-ribosyl)glycinamide + L-glutamine + ATP + H2O = 2-formamido-N(1)-(5-O-phospho-beta-D-ribosyl)acetamidine + L-glutamate + ADP + phosphate + H(+). It participates in purine metabolism; IMP biosynthesis via de novo pathway; 5-amino-1-(5-phospho-D-ribosyl)imidazole from N(2)-formyl-N(1)-(5-phospho-D-ribosyl)glycinamide: step 1/2. Part of the phosphoribosylformylglycinamidine synthase complex involved in the purines biosynthetic pathway. Catalyzes the ATP-dependent conversion of formylglycinamide ribonucleotide (FGAR) and glutamine to yield formylglycinamidine ribonucleotide (FGAM) and glutamate. The FGAM synthase complex is composed of three subunits. PurQ produces an ammonia molecule by converting glutamine to glutamate. PurL transfers the ammonia molecule to FGAR to form FGAM in an ATP-dependent manner. PurS interacts with PurQ and PurL and is thought to assist in the transfer of the ammonia molecule from PurQ to PurL. The chain is Phosphoribosylformylglycinamidine synthase subunit PurL from Rhizobium leguminosarum bv. trifolii (strain WSM2304).